Reading from the N-terminus, the 1478-residue chain is DNA-directed RNA polymerase subunit beta' (1478 aa).

Mg(2+)-binding residues include Asp535, Asp537, and Asp539. The Zn(2+) site is built by Cys1034, Cys1109, Cys1116, and Cys1119.

The protein belongs to the RNA polymerase beta' chain family. The RNAP catalytic core consists of 2 alpha, 1 beta, 1 beta' and 1 omega subunit. When a sigma factor is associated with the core the holoenzyme is formed, which can initiate transcription. Requires Mg(2+) as cofactor. Zn(2+) serves as cofactor.

The enzyme catalyses RNA(n) + a ribonucleoside 5'-triphosphate = RNA(n+1) + diphosphate. DNA-dependent RNA polymerase catalyzes the transcription of DNA into RNA using the four ribonucleoside triphosphates as substrates. The protein is DNA-directed RNA polymerase subunit beta' of Mycoplasmopsis agalactiae (strain NCTC 10123 / CIP 59.7 / PG2) (Mycoplasma agalactiae).